Reading from the N-terminus, the 1488-residue chain is DNA polymerase alpha catalytic subunit (1488 aa).

Disordered regions lie at residues 1–22, 79–124, and 236–325; these read MSESPSEPRAKRQRVDKNGRFA, LRDF…TGKA, and FFSS…ESED. Acidic residues predominate over residues 83-93; that stretch reads FEDEDEYSDGE. The short motif at 96-103 is the Nuclear localization signal element; that stretch reads RKDSKKKK. Residues 99 to 113 show a composition bias toward basic residues; sequence SKKKKGVAPNSKKRP. Residue serine 239 is modified to Phosphoserine. Residues 242-258 are compositionally biased toward basic and acidic residues; the sequence is IKKEPMPEKTPAKKATE. Positions 260–278 are enriched in acidic residues; it reads PFSDNEMDFSCLDDDENQF. Phosphoserine occurs at positions 262 and 269. Polar residues predominate over residues 286-303; that stretch reads TEKVSQTKTAAEKTSQSK. A compositionally biased stretch (basic and acidic residues) spans 304-325; sequence VAEKSAPKKETTGSPKESESED. The residue at position 314 (threonine 314) is a Phosphothreonine. Residue serine 317 is modified to Phosphoserine. A contains conserved residues essential for 3' -&gt; 5' exonuclease activities region spans residues 638-758; sequence DSERALLSWF…DLLEMYEKGE (121 aa). 2 DNA-binding regions span residues 675-734 and 1255-1380; these read QIVA…CKQV and PTKF…RKKS. Zn(2+)-binding residues include cysteine 1296, cysteine 1299, cysteine 1324, cysteine 1329, cysteine 1362, cysteine 1367, cysteine 1385, and cysteine 1388. The CysA-type zinc-finger motif lies at 1296–1327; it reads CVTCKTEQLMASAYRPGPSNSHIAVLQQCAKS. The CysB motif signature appears at 1362–1388; the sequence is CDHPDCNFNTRTHSLRKKSHRPLCQKC.

It belongs to the DNA polymerase type-B family. As to quaternary structure, component of the alpha DNA polymerase complex (also known as the alpha DNA polymerase-primase complex) consisting of four subunits: the catalytic subunit PolA1, the regulatory subunit PolA2, and the primase complex subunits Prim1 and Prim2 respectively. PolA1 associates with the DNA primase complex before association with PolA2. Interacts with Dpit47; the interaction inhibits the activity of the DNA polymerase and occurs only in proliferating cells but not in quiescent cells. Post-translationally, in embryos, a cleaved form of 130 kDa is produced up to cycle 14 and then disappears. As to expression, expressed in embryos (at protein level).

It localises to the nucleus. It catalyses the reaction DNA(n) + a 2'-deoxyribonucleoside 5'-triphosphate = DNA(n+1) + diphosphate. Inhibited by N2-(p-n-butylphenyl) deoxyguanosine 5'-triphosphate and N2-(p-n-butylphenyl) deoxyadenosine 5'-triphosphate. DNA synthesis is not inhibited by fungal toxin alpha-amaitin. The 3'-5' exonuclease activity is inhibited by 10mM dGMP. Functionally, catalytic subunit of the DNA polymerase alpha complex (also known as the alpha DNA polymerase-primase complex) which plays an essential role in the initiation of DNA synthesis. During the S phase of the cell cycle, the DNA polymerase alpha complex (composed of a catalytic subunit PolA1, an accessory subunit PolA2 and two primase subunits, the catalytic subunit Prim1 and the regulatory subunit Prim2) is recruited to DNA at the replicative forks. The primase subunit of the polymerase alpha complex initiates DNA synthesis by oligomerising short RNA primers on both leading and lagging strands. These primers are initially extended by the polymerase alpha catalytic subunit and subsequently transferred to polymerase delta and polymerase epsilon for processive synthesis on the lagging and leading strand, respectively. In addition to polymerase activity, exhibits 3' to 5' exonuclease activity. This is DNA polymerase alpha catalytic subunit from Drosophila melanogaster (Fruit fly).